The sequence spans 571 residues: Urease subunit alpha (571 aa).

Positions 133 to 571 (GGIDTHVHFI…LPLTQRYFLF (439 aa)) constitute a Urease domain. The Ni(2+) site is built by H138, H140, and K221. At K221 the chain carries N6-carboxylysine. H223 is a binding site for substrate. H250 and H276 together coordinate Ni(2+). The active-site Proton donor is the H324. D364 is a binding site for Ni(2+).

The protein belongs to the metallo-dependent hydrolases superfamily. Urease alpha subunit family. In terms of assembly, heterotrimer of UreA (gamma), UreB (beta) and UreC (alpha) subunits. Three heterotrimers associate to form the active enzyme. It depends on Ni cation as a cofactor. Post-translationally, carboxylation allows a single lysine to coordinate two nickel ions.

The protein localises to the cytoplasm. The enzyme catalyses urea + 2 H2O + H(+) = hydrogencarbonate + 2 NH4(+). It participates in nitrogen metabolism; urea degradation; CO(2) and NH(3) from urea (urease route): step 1/1. The polypeptide is Urease subunit alpha (Staphylococcus aureus (strain USA300)).